The following is a 506-amino-acid chain: 2,3-bisphosphoglycerate-independent phosphoglycerate mutase (506 aa).

Mn(2+)-binding residues include Asp13 and Ser63. The active-site Phosphoserine intermediate is Ser63. Substrate-binding positions include His124, 153-154 (RD), Arg183, Arg189, 254-257 (RADR), and Lys330. Residues Asp396, His400, Asp437, His438, and His456 each coordinate Mn(2+).

This sequence belongs to the BPG-independent phosphoglycerate mutase family. Monomer. Mn(2+) serves as cofactor.

The enzyme catalyses (2R)-2-phosphoglycerate = (2R)-3-phosphoglycerate. The protein operates within carbohydrate degradation; glycolysis; pyruvate from D-glyceraldehyde 3-phosphate: step 3/5. Functionally, catalyzes the interconversion of 2-phosphoglycerate and 3-phosphoglycerate. The protein is 2,3-bisphosphoglycerate-independent phosphoglycerate mutase of Cereibacter sphaeroides (strain ATCC 17023 / DSM 158 / JCM 6121 / CCUG 31486 / LMG 2827 / NBRC 12203 / NCIMB 8253 / ATH 2.4.1.) (Rhodobacter sphaeroides).